Consider the following 81-residue polypeptide: Small ribosomal subunit protein bS18 (81 aa).

The protein belongs to the bacterial ribosomal protein bS18 family. Part of the 30S ribosomal subunit. Forms a tight heterodimer with protein bS6.

In terms of biological role, binds as a heterodimer with protein bS6 to the central domain of the 16S rRNA, where it helps stabilize the platform of the 30S subunit. The protein is Small ribosomal subunit protein bS18 of Desulfotalea psychrophila (strain LSv54 / DSM 12343).